The sequence spans 61 residues: Small ribosomal subunit protein uS14 (61 aa).

Zn(2+) contacts are provided by C24, C27, C40, and C43.

It belongs to the universal ribosomal protein uS14 family. Zinc-binding uS14 subfamily. Part of the 30S ribosomal subunit. Contacts proteins S3 and S10. Requires Zn(2+) as cofactor.

Binds 16S rRNA, required for the assembly of 30S particles and may also be responsible for determining the conformation of the 16S rRNA at the A site. The polypeptide is Small ribosomal subunit protein uS14 (Treponema denticola (strain ATCC 35405 / DSM 14222 / CIP 103919 / JCM 8153 / KCTC 15104)).